Here is a 338-residue protein sequence, read N- to C-terminus: Putative transport protein TM_1349 (338 aa).

Helical transmembrane passes span 20-40 (ILISFLVFKIFPDVFAVIVLM), 68-88 (ALLLFFFVMVYSLYMIIPPVF), 147-167 (VSVTTIIVFTLFGLGYTVFYI), 203-223 (VIFINAVIIGLSYWIVFEAFN), 239-259 (FIPIVGVVLEYIPVLLFSLTL), 263-283 (GVLLIALFAILIHAVAFVVFI), and 297-317 (IILSILFFGKLFGLFGSFVGV).

Belongs to the autoinducer-2 exporter (AI-2E) (TC 2.A.86) family.

The protein resides in the cell membrane. This chain is Putative transport protein TM_1349, found in Thermotoga maritima (strain ATCC 43589 / DSM 3109 / JCM 10099 / NBRC 100826 / MSB8).